A 57-amino-acid chain; its full sequence is Large ribosomal subunit protein bL32 (57 aa).

The segment at 1 to 21 is disordered; it reads MAVPKRRTSKKVKNQRRTHKK.

The protein belongs to the bacterial ribosomal protein bL32 family.

This Oceanobacillus iheyensis (strain DSM 14371 / CIP 107618 / JCM 11309 / KCTC 3954 / HTE831) protein is Large ribosomal subunit protein bL32.